We begin with the raw amino-acid sequence, 218 residues long: Adenylate kinase (218 aa).

11–16 is an ATP binding site; that stretch reads GAGKGT. Residues 31 to 60 form an NMP region; the sequence is STGDMFREAMANKTKVGLEAKSYIDKGNLV. Residues threonine 32, arginine 37, 58–60, 86–89, and glutamine 93 contribute to the AMP site; these read NLV and GFPR. An LID region spans residues 127-165; that stretch reads ARYMCKNCGATYNKISKQPKVEGTCDRCGSHEFYQREDD. Arginine 128 serves as a coordination point for ATP. Residues cysteine 131 and cysteine 134 each coordinate Zn(2+). ATP is bound at residue 137-138; that stretch reads TY. Zn(2+) contacts are provided by cysteine 151 and cysteine 154. Arginine 162 and arginine 173 together coordinate AMP. Glutamine 201 is a binding site for ATP.

Belongs to the adenylate kinase family. Monomer.

The protein localises to the cytoplasm. It carries out the reaction AMP + ATP = 2 ADP. It functions in the pathway purine metabolism; AMP biosynthesis via salvage pathway; AMP from ADP: step 1/1. In terms of biological role, catalyzes the reversible transfer of the terminal phosphate group between ATP and AMP. Plays an important role in cellular energy homeostasis and in adenine nucleotide metabolism. This Lactobacillus acidophilus (strain ATCC 700396 / NCK56 / N2 / NCFM) protein is Adenylate kinase.